The sequence spans 64 residues: Small ribosomal subunit protein bS21 (64 aa).

Belongs to the bacterial ribosomal protein bS21 family.

The chain is Small ribosomal subunit protein bS21 from Pelagibacter ubique (strain HTCC1062).